Here is a 699-residue protein sequence, read N- to C-terminus: tRNA(Met) cytidine acetyltransferase TmcA (699 aa).

ATP-binding positions include Gln-178, 200 to 209 (GRGKSTLAGM), and Arg-322. The region spanning 408 to 547 (MHIASAQVAG…SGCYSAMAIL (140 aa)) is the N-acetyltransferase domain. Residues 475–477 (IAV) and 482–488 (RRQGIGR) each bind acetyl-CoA.

This sequence belongs to the RNA cytidine acetyltransferase family. TmcA subfamily.

The protein localises to the cytoplasm. The catalysed reaction is cytidine(34) in elongator tRNA(Met) + acetyl-CoA + ATP + H2O = N(4)-acetylcytidine(34) in elongator tRNA(Met) + ADP + phosphate + CoA + H(+). Its function is as follows. Catalyzes the formation of N(4)-acetylcytidine (ac(4)C) at the wobble position of tRNA(Met), by using acetyl-CoA as an acetyl donor and ATP (or GTP). The sequence is that of tRNA(Met) cytidine acetyltransferase TmcA from Pectobacterium atrosepticum (strain SCRI 1043 / ATCC BAA-672) (Erwinia carotovora subsp. atroseptica).